The sequence spans 581 residues: Arginine--tRNA ligase (581 aa).

The short motif at 126–136 (PNLAKEMHVGH) is the 'HIGH' region element.

The protein belongs to the class-I aminoacyl-tRNA synthetase family. In terms of assembly, monomer.

It is found in the cytoplasm. The enzyme catalyses tRNA(Arg) + L-arginine + ATP = L-arginyl-tRNA(Arg) + AMP + diphosphate. In Shewanella frigidimarina (strain NCIMB 400), this protein is Arginine--tRNA ligase.